The chain runs to 297 residues: Large ribosomal subunit protein uL18 (297 aa).

Residue Lys164 forms a Glycyl lysine isopeptide (Lys-Gly) (interchain with G-Cter in ubiquitin) linkage. Residues Ser167, Ser176, and Ser235 each carry the phosphoserine modification.

The protein belongs to the universal ribosomal protein uL18 family. As to quaternary structure, component of the large ribosomal subunit (LSU). Mature yeast ribosomes consist of a small (40S) and a large (60S) subunit. The 40S small subunit contains 1 molecule of ribosomal RNA (18S rRNA) and 33 different proteins (encoded by 57 genes). The large 60S subunit contains 3 rRNA molecules (25S, 5.8S and 5S rRNA) and 46 different proteins (encoded by 81 genes). Component of a hexameric 5S RNP precursor complex, composed of 5S RNA, RRS1, RPF2, RPL5, RPL11A/RPL11B and SYO1; this complex acts as a precursor for ribosome assembly. RPL5/uL18 forms a heterotrimeric complex with SYO1 and RPL11A/RPL11B/uL5. Interaction of this complex with KAP104 allows the nuclear import of the heterotrimer.

The protein resides in the cytoplasm. Its subcellular location is the nucleus. Component of the ribosome, a large ribonucleoprotein complex responsible for the synthesis of proteins in the cell. The small ribosomal subunit (SSU) binds messenger RNAs (mRNAs) and translates the encoded message by selecting cognate aminoacyl-transfer RNA (tRNA) molecules. The large subunit (LSU) contains the ribosomal catalytic site termed the peptidyl transferase center (PTC), which catalyzes the formation of peptide bonds, thereby polymerizing the amino acids delivered by tRNAs into a polypeptide chain. The nascent polypeptides leave the ribosome through a tunnel in the LSU and interact with protein factors that function in enzymatic processing, targeting, and the membrane insertion of nascent chains at the exit of the ribosomal tunnel. This is Large ribosomal subunit protein uL18 from Saccharomyces cerevisiae (strain ATCC 204508 / S288c) (Baker's yeast).